Here is a 99-residue protein sequence, read N- to C-terminus: Plastocyanin B'/B'' (99 aa).

The 99-residue stretch at 1–99 folds into the Plastocyanin-like domain; the sequence is IEVLLGSDDG…AGMVGKVTVN (99 aa). Positions 37, 84, 87, and 92 each coordinate Cu cation.

The protein belongs to the plastocyanin family. The cofactor is Cu(2+).

The protein resides in the plastid. The protein localises to the chloroplast thylakoid membrane. Functionally, participates in electron transfer between P700 and the cytochrome b6-f complex in photosystem I. The polypeptide is Plastocyanin B'/B'' (Nicotiana tabacum (Common tobacco)).